Reading from the N-terminus, the 392-residue chain is DNA replication and repair protein RecF (392 aa).

30 to 37 (GPNAAGKT) serves as a coordination point for ATP.

The protein belongs to the RecF family.

Its subcellular location is the cytoplasm. The RecF protein is involved in DNA metabolism; it is required for DNA replication and normal SOS inducibility. RecF binds preferentially to single-stranded, linear DNA. It also seems to bind ATP. This chain is DNA replication and repair protein RecF, found in Chloroflexus aggregans (strain MD-66 / DSM 9485).